Here is a 1194-residue protein sequence, read N- to C-terminus: Immunoglobulin superfamily member 3 (1194 aa).

A signal peptide spans 1–19 (MKCFFPVLSCLAVLGVVSA). 8 consecutive Ig-like C2-type domains span residues 20–138 (QRQV…AKMN), 143–262 (PDSL…WYAM), 276–386 (PTDK…KTVT), 401–539 (PIIV…ISIT), 545–661 (FAVT…WTRL), 676–803 (PVTK…EEVS), 813–945 (PDSR…TALT), and 949–1097 (PDAS…YRLT). At 20–1124 (QRQVTVQEGP…LQSIICSNDA (1105 aa)) the chain is on the extracellular side. Disulfide bonds link Cys-42–Cys-120 and Cys-167–Cys-246. Residue Asn-43 is glycosylated (N-linked (GlcNAc...) asparagine). Residues 250 to 252 (EWI) carry the EWI motif motif. Residues Cys-302 and Cys-376 are joined by a disulfide bond. An N-linked (GlcNAc...) asparagine glycan is attached at Asn-418. 2 disulfides stabilise this stretch: Cys-432-Cys-511 and Cys-566-Cys-645. A glycan (N-linked (GlcNAc...) asparagine) is linked at Asn-655. Disulfide bonds link Cys-701/Cys-782, Cys-838/Cys-918, and Cys-974/Cys-1080. Asn-842 is a glycosylation site (N-linked (GlcNAc...) asparagine). A disordered region spans residues 997–1033 (AGGKRSSPGLEEQEEEREEEEEEDDDDDDDPTERTAL). Acidic residues predominate over residues 1007–1027 (EEQEEEREEEEEEDDDDDDDP). Asn-1077 is a glycosylation site (N-linked (GlcNAc...) asparagine). A helical membrane pass occupies residues 1125-1145 (LFYFVFFYPFPIFGILIITIL). Residues 1146 to 1194 (LVRFKSRNSSKNSDGKNGVPLLWIKEPHLNYSPTCLEPPVLSIHPGAID) are Cytoplasmic-facing.

As to expression, expressed in a wide range of tissues with High expression in Placenta, kidney and lung.

It is found in the membrane. The chain is Immunoglobulin superfamily member 3 (IGSF3) from Homo sapiens (Human).